The chain runs to 505 residues: UDP-N-acetylmuramoyl-L-alanyl-D-glutamate--2,6-diaminopimelate ligase (505 aa).

A UDP-N-acetyl-alpha-D-muramoyl-L-alanyl-D-glutamate-binding site is contributed by serine 42. 126-132 (GTNGKTT) provides a ligand contact to ATP. UDP-N-acetyl-alpha-D-muramoyl-L-alanyl-D-glutamate contacts are provided by residues 168 to 169 (TT), serine 195, glutamine 201, and arginine 203. At lysine 235 the chain carries N6-carboxylysine. Residues arginine 399, 423 to 426 (DNPR), glycine 474, and glutamate 478 each bind meso-2,6-diaminopimelate. Positions 423–426 (DNPR) match the Meso-diaminopimelate recognition motif motif.

The protein belongs to the MurCDEF family. MurE subfamily. It depends on Mg(2+) as a cofactor. Carboxylation is probably crucial for Mg(2+) binding and, consequently, for the gamma-phosphate positioning of ATP.

The protein localises to the cytoplasm. The catalysed reaction is UDP-N-acetyl-alpha-D-muramoyl-L-alanyl-D-glutamate + meso-2,6-diaminopimelate + ATP = UDP-N-acetyl-alpha-D-muramoyl-L-alanyl-gamma-D-glutamyl-meso-2,6-diaminopimelate + ADP + phosphate + H(+). Its pathway is cell wall biogenesis; peptidoglycan biosynthesis. Catalyzes the addition of meso-diaminopimelic acid to the nucleotide precursor UDP-N-acetylmuramoyl-L-alanyl-D-glutamate (UMAG) in the biosynthesis of bacterial cell-wall peptidoglycan. This chain is UDP-N-acetylmuramoyl-L-alanyl-D-glutamate--2,6-diaminopimelate ligase, found in Synechocystis sp. (strain ATCC 27184 / PCC 6803 / Kazusa).